The chain runs to 431 residues: Interleukin-11 receptor subunit alpha (431 aa).

The signal sequence occupies residues 1 to 23 (MSSSRSGLTRVLVAVATALVSSS). Residues 24 to 371 (TPCPQAWGPP…DPLEQVAVLA (348 aa)) lie on the Extracellular side of the membrane. Residues 27–110 (PQAWGPPGVQ…FGGMVTLKLG (84 aa)) form the Ig-like C2-type domain. Cystine bridges form between cysteine 48/cysteine 94, cysteine 120/cysteine 130, and cysteine 170/cysteine 180. Fibronectin type-III domains are found at residues 112–219 (PPAR…LRPD) and 220–317 (PPQG…TPST). An N-linked (GlcNAc...) asparagine glycan is attached at asparagine 127. Positions 151 to 170 (KTLPGAESQRESPSTGPWPC) are disordered. Asparagine 194 carries N-linked (GlcNAc...) asparagine glycosylation. The WSXWS motif motif lies at 304 to 308 (WSAWS). A disordered region spans residues 310-360 (EAWGTPSTGPLRDEVPDGSRGHEQKLEAAAQEDSPAPPSPSLQPDPRPLDH). Residues 320 to 335 (LRDEVPDGSRGHEQKL) show a composition bias toward basic and acidic residues. A compositionally biased stretch (pro residues) spans 344–355 (PAPPSPSLQPDP). The helical transmembrane segment at 372-392 (SLGIFSFLGLAVGALALGLWL) threads the bilayer. At 393–431 (RLRRSGKDGPQKPGFLAPMIPGDKLPGIPNLQRTPENFS) the chain is on the cytoplasmic side. Positions 402–431 (PQKPGFLAPMIPGDKLPGIPNLQRTPENFS) are disordered.

Belongs to the type I cytokine receptor family. Type 3 subfamily. As to quaternary structure, on IL11 binding, forms a multimer complex with IL6ST/gp130. A short soluble form is also released from the membrane by proteolysis. The sIL11RA is formed either by limited proteolysis of membrane-bound receptors, a process referred to as ectodomain shedding, or directly secreted from the cells after alternative mRNA splicing. mIL11RA is cleaved by the proteases ADAM10, ELANE and PRTN3.

The protein resides in the membrane. It is found in the secreted. Its function is as follows. Receptor for interleukin-11 (IL11). The receptor systems for IL6, LIF, OSM, CNTF, IL11 and CT1 can utilize IL6ST for initiating signal transmission. The IL11/IL11RA/IL6ST complex may be involved in the control of proliferation and/or differentiation of skeletogenic progenitor or other mesenchymal cells. Essential for the normal development of craniofacial bones and teeth. Restricts suture fusion and tooth number. Soluble form of IL11 receptor (sIL11RA) that acts as an agonist of IL11 activity. The IL11:sIL11RA complex binds to IL6ST/gp130 on cell surfaces and induces signaling also on cells that do not express membrane-bound IL11RA in a process called IL11 trans-signaling. This chain is Interleukin-11 receptor subunit alpha, found in Rattus norvegicus (Rat).